We begin with the raw amino-acid sequence, 94 residues long: Integration host factor subunit beta (94 aa).

It belongs to the bacterial histone-like protein family. As to quaternary structure, heterodimer of an alpha and a beta chain.

Functionally, this protein is one of the two subunits of integration host factor, a specific DNA-binding protein that functions in genetic recombination as well as in transcriptional and translational control. This is Integration host factor subunit beta from Citrobacter koseri (strain ATCC BAA-895 / CDC 4225-83 / SGSC4696).